Consider the following 309-residue polypeptide: Homoserine kinase (309 aa).

91 to 101 (PIGSGLGSSAC) lines the ATP pocket.

The protein belongs to the GHMP kinase family. Homoserine kinase subfamily.

It is found in the cytoplasm. The enzyme catalyses L-homoserine + ATP = O-phospho-L-homoserine + ADP + H(+). It functions in the pathway amino-acid biosynthesis; L-threonine biosynthesis; L-threonine from L-aspartate: step 4/5. Functionally, catalyzes the ATP-dependent phosphorylation of L-homoserine to L-homoserine phosphate. In Buchnera aphidicola subsp. Schizaphis graminum (strain Sg), this protein is Homoserine kinase.